The sequence spans 524 residues: Glutamyl-tRNA(Gln) amidotransferase subunit A (524 aa).

Catalysis depends on charge relay system residues K109 and S184. Catalysis depends on S208, which acts as the Acyl-ester intermediate.

The protein belongs to the amidase family. GatA subfamily. As to quaternary structure, heterotrimer of A, B and C subunits.

It catalyses the reaction L-glutamyl-tRNA(Gln) + L-glutamine + ATP + H2O = L-glutaminyl-tRNA(Gln) + L-glutamate + ADP + phosphate + H(+). Its function is as follows. Allows the formation of correctly charged Gln-tRNA(Gln) through the transamidation of misacylated Glu-tRNA(Gln) in organisms which lack glutaminyl-tRNA synthetase. The reaction takes place in the presence of glutamine and ATP through an activated gamma-phospho-Glu-tRNA(Gln). This Tropheryma whipplei (strain Twist) (Whipple's bacillus) protein is Glutamyl-tRNA(Gln) amidotransferase subunit A.